The chain runs to 330 residues: Putative aminohydrolase AF_1775 (330 aa).

Residues His54, His56, His181, and Asp253 each contribute to the Zn(2+) site.

It belongs to the metallo-dependent hydrolases superfamily. ATZ/TRZ family.

This Archaeoglobus fulgidus (strain ATCC 49558 / DSM 4304 / JCM 9628 / NBRC 100126 / VC-16) protein is Putative aminohydrolase AF_1775.